The chain runs to 817 residues: LPS-assembly protein LptD (817 aa).

The first 26 residues, 1–26, serve as a signal peptide directing secretion; it reads MPALVVSPDLVRGAAGASAAPTPAPA. Positions 1-101 are disordered; it reads MPALVVSPDL…ARKPGSTEVR (101 aa). Over residues 13–90 the composition is skewed to low complexity; that stretch reads GAAGASAAPT…PAASASPADA (78 aa).

This sequence belongs to the LptD family. As to quaternary structure, component of the lipopolysaccharide transport and assembly complex. Interacts with LptE and LptA.

Its subcellular location is the cell outer membrane. Together with LptE, is involved in the assembly of lipopolysaccharide (LPS) at the surface of the outer membrane. This Azoarcus sp. (strain BH72) protein is LPS-assembly protein LptD.